A 238-amino-acid polypeptide reads, in one-letter code: Ribosomal RNA small subunit methyltransferase G (238 aa).

Residues Gly-78, Phe-83, 129 to 130, and Arg-148 contribute to the S-adenosyl-L-methionine site; that span reads AE. Positions 217-238 are disordered; sequence KKKETPKKYPRKAGTPAKSPIK.

It belongs to the methyltransferase superfamily. RNA methyltransferase RsmG family.

Its subcellular location is the cytoplasm. Specifically methylates the N7 position of a guanine in 16S rRNA. This chain is Ribosomal RNA small subunit methyltransferase G, found in Lactococcus lactis subsp. cremoris (strain MG1363).